A 605-amino-acid chain; its full sequence is Isocitrate dehydrogenase kinase/phosphatase (605 aa).

Residues 353-359 and K374 each bind ATP; that span reads APGFKGT. D413 is a catalytic residue.

This sequence belongs to the AceK family.

Its subcellular location is the cytoplasm. The catalysed reaction is L-seryl-[isocitrate dehydrogenase] + ATP = O-phospho-L-seryl-[isocitrate dehydrogenase] + ADP + H(+). Bifunctional enzyme which can phosphorylate or dephosphorylate isocitrate dehydrogenase (IDH) on a specific serine residue. This is a regulatory mechanism which enables bacteria to bypass the Krebs cycle via the glyoxylate shunt in response to the source of carbon. When bacteria are grown on glucose, IDH is fully active and unphosphorylated, but when grown on acetate or ethanol, the activity of IDH declines drastically concomitant with its phosphorylation. The protein is Isocitrate dehydrogenase kinase/phosphatase of Rhodopseudomonas palustris (strain HaA2).